The chain runs to 759 residues: uncharacterized protein (759 aa).

Disordered stretches follow at residues 269 to 328 (SQRV…GEEP) and 406 to 759 (LPLR…AQTA). A compositionally biased stretch (basic and acidic residues) spans 289 to 299 (AGGKEEAERGG). Low complexity predominate over residues 406–415 (LPLRPPSGSG). Basic and acidic residues predominate over residues 417–430 (AARKPGYEKEEGRG). Residues 431–444 (RATTASATAATSPR) show a composition bias toward low complexity. Basic and acidic residues-rich tracts occupy residues 469-518 (PESE…RGEH) and 525-545 (DSGR…EKGT). Positions 585–599 (WVPPPHLLFPSPLPS) are enriched in pro residues. A compositionally biased stretch (low complexity) spans 659–680 (SLSSLSSSSSSSSSSSPSYSPS). Residues 681 to 690 (PLSPPSPVSP) show a composition bias toward pro residues. Low complexity-rich tracts occupy residues 691-704 (SSPR…IRSP) and 728-746 (PPFS…PSAP).

This is an uncharacterized protein from Human herpesvirus 6B (strain Z29) (HHV-6 variant B).